The following is an 88-amino-acid chain: Small ribosomal subunit protein uS15c (88 aa).

This sequence belongs to the universal ribosomal protein uS15 family. As to quaternary structure, part of the 30S ribosomal subunit.

The protein localises to the plastid. The protein resides in the chloroplast. The polypeptide is Small ribosomal subunit protein uS15c (rps15) (Nasturtium officinale (Watercress)).